Consider the following 280-residue polypeptide: 3-dehydroshikimate dehydratase (280 aa).

Substrate-binding residues include Tyr-70, Arg-102, and Glu-142. Residue Glu-142 participates in Mn(2+) binding. His-144 serves as the catalytic Proton acceptor. Substrate contacts are provided by Asp-172 and His-175. Asp-172 is a Mn(2+) binding site. His-198 provides a ligand contact to Mn(2+). Residues Tyr-217 and Glu-253 each coordinate substrate. Glu-253 serves as a coordination point for Mn(2+).

As to quaternary structure, homodimer. Mn(2+) is required as a cofactor.

The enzyme catalyses 3-dehydroshikimate = 3,4-dihydroxybenzoate + H2O. Its pathway is aromatic compound metabolism; 3,4-dihydroxybenzoate biosynthesis; 3,4-dihydroxybenzoate from 3-dehydroquinate: step 2/2. It functions in the pathway siderophore biosynthesis; petrobactin biosynthesis. Functionally, involved in the biosynthesis of petrobactin, a catecholate siderophore that functions in both iron acquisition and virulence. Catalyzes the conversion of 3-dehydroshikimate to 3,4-dihydroxybenzoate (3,4-DHBA). The sequence is that of 3-dehydroshikimate dehydratase from Bacillus anthracis.